A 460-amino-acid polypeptide reads, in one-letter code: Argininosuccinate lyase (460 aa).

It belongs to the lyase 1 family. Argininosuccinate lyase subfamily.

Its subcellular location is the cytoplasm. It catalyses the reaction 2-(N(omega)-L-arginino)succinate = fumarate + L-arginine. It functions in the pathway amino-acid biosynthesis; L-arginine biosynthesis; L-arginine from L-ornithine and carbamoyl phosphate: step 3/3. The polypeptide is Argininosuccinate lyase (Maridesulfovibrio salexigens (strain ATCC 14822 / DSM 2638 / NCIMB 8403 / VKM B-1763) (Desulfovibrio salexigens)).